We begin with the raw amino-acid sequence, 86 residues long: Acyl-CoA-binding protein homolog (86 aa).

Positions 2 to 86 (VSEQFNAAAE…FVEGLVAKYA (85 aa)) constitute an ACB domain. An acyl-CoA-binding positions include K14, 29–33 (YALFK), K51, K55, and Y74.

The protein belongs to the ACBP family. As to expression, expressed in larval and pupal brains. In adults, expressed in cardia, part of the Malpighian tubules, fat body, and gametes of both sexes.

Binds medium- and long-chain acyl-CoA esters with very high affinity and may function as an intracellular carrier of acyl-CoA esters. May be involved in energy metabolism in a manner that depends on the substrate used for energy production. Dbi and its metabolites are involved in the regulation of multiple biological processes. The chain is Acyl-CoA-binding protein homolog from Drosophila melanogaster (Fruit fly).